Reading from the N-terminus, the 256-residue chain is MAAPWVSLRLVAPMWNGTRGIHRLGGAVVPEGNQKKERKMLQFLNNHFYDVEALRGYLLQREMSKVHLKNRSFTWLEEQHGPYSAGAFFILKQGGAVKFRDKEWIRPDKYGHFSPEFWNFREVPVEAVDASDCEINYEGLDNLLLLKELQSLSLQRCPHVDDWCLSRLYPLADSLQELSLAGCPRVSERGLACLHHLQNLRRLDISDLPAVSNPGLTQILVEEMLPNCQVVGVDWAEGLKLGPEERPQDTASPVPA.

At S252 the chain carries Phosphoserine.

Belongs to the ATP synthase subunit s family. In terms of assembly, interacts with incompletely assembled mitochondrial NADH:ubiquinone oxidoreductase complex (complex I).

Its subcellular location is the mitochondrion. Its function is as follows. Required for the assembly of the mitochondrial NADH:ubiquinone oxidoreductase complex (complex I). Involved in the assembly of the distal region of complex I. The polypeptide is Distal membrane-arm assembly complex protein 2 (Macaca fascicularis (Crab-eating macaque)).